The primary structure comprises 320 residues: Cytochrome f (320 aa).

A signal peptide spans 1-35 (MQTRNTFSWIKEEITRSISVSLMIYIITGASISNA). Heme is bound by residues Y36, C56, C59, and H60. The helical transmembrane segment at 286 to 306 (VQGLLFFLASIVFAQIFLVLK) threads the bilayer.

The protein belongs to the cytochrome f family. As to quaternary structure, the 4 large subunits of the cytochrome b6-f complex are cytochrome b6, subunit IV (17 kDa polypeptide, petD), cytochrome f and the Rieske protein, while the 4 small subunits are PetG, PetL, PetM and PetN. The complex functions as a dimer. Heme serves as cofactor.

The protein localises to the plastid. It is found in the chloroplast thylakoid membrane. In terms of biological role, component of the cytochrome b6-f complex, which mediates electron transfer between photosystem II (PSII) and photosystem I (PSI), cyclic electron flow around PSI, and state transitions. The protein is Cytochrome f of Gossypium hirsutum (Upland cotton).